The chain runs to 208 residues: FMN-dependent NADH:quinone oxidoreductase 2 (208 aa).

This sequence belongs to the azoreductase type 1 family. As to quaternary structure, homodimer. FMN is required as a cofactor.

The enzyme catalyses 2 a quinone + NADH + H(+) = 2 a 1,4-benzosemiquinone + NAD(+). It catalyses the reaction N,N-dimethyl-1,4-phenylenediamine + anthranilate + 2 NAD(+) = 2-(4-dimethylaminophenyl)diazenylbenzoate + 2 NADH + 2 H(+). Functionally, quinone reductase that provides resistance to thiol-specific stress caused by electrophilic quinones. In terms of biological role, also exhibits azoreductase activity. Catalyzes the reductive cleavage of the azo bond in aromatic azo compounds to the corresponding amines. The polypeptide is FMN-dependent NADH:quinone oxidoreductase 2 (Bacillus anthracis).